The chain runs to 125 residues: Protein ApaG (125 aa).

Residues 1–125 (MINSPRVCIQ…FRLAVPTLIH (125 aa)) form the ApaG domain.

This is Protein ApaG from Escherichia coli (strain SE11).